We begin with the raw amino-acid sequence, 310 residues long: Putative HTH-type transcriptional regulatory protein LS215_1371 (310 aa).

Residues leucine 125–valine 180 form the HTH cro/C1-type domain. Residues isoleucine 136–lysine 155 constitute a DNA-binding region (H-T-H motif).

The sequence is that of Putative HTH-type transcriptional regulatory protein LS215_1371 from Saccharolobus islandicus (strain L.S.2.15 / Lassen #1) (Sulfolobus islandicus).